We begin with the raw amino-acid sequence, 484 residues long: tRNA sulfurtransferase (484 aa).

Positions 61–165 constitute a THUMP domain; sequence ILLVELLGRI…NDKMMLIKAR (105 aa). ATP-binding positions include 183–184, K265, G287, and Q296; that span reads LI. The cysteines at positions 344 and 456 are disulfide-linked. Residues 404 to 484 enclose the Rhodanese domain; it reads LSANDVILDI…DNVKVLNKIS (81 aa). C456 functions as the Cysteine persulfide intermediate in the catalytic mechanism.

Belongs to the ThiI family.

The protein localises to the cytoplasm. The catalysed reaction is [ThiI sulfur-carrier protein]-S-sulfanyl-L-cysteine + a uridine in tRNA + 2 reduced [2Fe-2S]-[ferredoxin] + ATP + H(+) = [ThiI sulfur-carrier protein]-L-cysteine + a 4-thiouridine in tRNA + 2 oxidized [2Fe-2S]-[ferredoxin] + AMP + diphosphate. It catalyses the reaction [ThiS sulfur-carrier protein]-C-terminal Gly-Gly-AMP + S-sulfanyl-L-cysteinyl-[cysteine desulfurase] + AH2 = [ThiS sulfur-carrier protein]-C-terminal-Gly-aminoethanethioate + L-cysteinyl-[cysteine desulfurase] + A + AMP + 2 H(+). Its pathway is cofactor biosynthesis; thiamine diphosphate biosynthesis. Functionally, catalyzes the ATP-dependent transfer of a sulfur to tRNA to produce 4-thiouridine in position 8 of tRNAs, which functions as a near-UV photosensor. Also catalyzes the transfer of sulfur to the sulfur carrier protein ThiS, forming ThiS-thiocarboxylate. This is a step in the synthesis of thiazole, in the thiamine biosynthesis pathway. The sulfur is donated as persulfide by IscS. The sequence is that of tRNA sulfurtransferase from Histophilus somni (strain 129Pt) (Haemophilus somnus).